The sequence spans 123 residues: WAP four-disulfide core domain protein 5 (123 aa).

Residues 1 to 24 form the signal peptide; that stretch reads MRIQSLLLLGALLAVGSQLPAVFG. WAP domains lie at 27-73 and 74-121; these read KGEK…CIPR and VSVK…RDPA. 8 disulfide bridges follow: Cys34–Cys62, Cys41–Cys66, Cys49–Cys61, Cys55–Cys70, Cys81–Cys109, Cys88–Cys113, Cys96–Cys108, and Cys102–Cys117.

Its subcellular location is the secreted. Its function is as follows. Putative acid-stable proteinase inhibitor. This is WAP four-disulfide core domain protein 5 (WFDC5) from Macaca mulatta (Rhesus macaque).